Here is an 840-residue protein sequence, read N- to C-terminus: Phosphatidylinositol-3-phosphatase myotubularin-1 (840 aa).

Positions 1–28 are disordered; that stretch reads MTPPRPPSGRVRSLRDYSSESEKMDGTG. A compositionally biased stretch (basic and acidic residues) spans 13-25; it reads SLRDYSSESEKMD. One can recognise a GRAM domain in the interval 45-112; it reads GSFSNLSCLL…ATIEKFNKMV (68 aa). A Myotubularin phosphatase domain is found at 199-650; sequence GKSSIRASMD…LAPTLWPQFH (452 aa). Residues 332–335, 357–358, 443–449, and Arg-489 each bind substrate; these read NGAM, NI, and CSDGWDR. Catalysis depends on Cys-443, which acts as the Phosphocysteine intermediate. Positions 506–535 are disordered; the sequence is QSSSAGSFPSSPVRQSSGSAASQSSSSSHG. Over residues 507 to 535 the composition is skewed to low complexity; it reads SSSAGSFPSSPVRQSSGSAASQSSSSSHG. A coiled-coil region spans residues 666 to 734; sequence VQCRAMTVKY…AALTRAVQSL (69 aa). Residues 745 to 771 are disordered; the sequence is VEDDPRSSLENNPRRRNRHGNNSDVSV.

This sequence belongs to the protein-tyrosine phosphatase family. Non-receptor class myotubularin subfamily. Mostly expressed in siliques and leaves (including hydathodes), and, to a lower extent, in flowers and roots.

The protein localises to the cytoplasm. It is found in the endosome membrane. The enzyme catalyses a 1,2-diacyl-sn-glycero-3-phospho-(1D-myo-inositol-3-phosphate) + H2O = a 1,2-diacyl-sn-glycero-3-phospho-(1D-myo-inositol) + phosphate. The catalysed reaction is a 1,2-diacyl-sn-glycero-3-phospho-(1D-myo-inositol-3,5-bisphosphate) + H2O = a 1,2-diacyl-sn-glycero-3-phospho-(1D-myo-inositol-5-phosphate) + phosphate. Phosphatase with phosphoinositide 3'-phosphatase activity that can use phosphatidylinositol-3-phosphate (PtdIns3P) and phosphatidylinositol-3,5-diphosphate (PtdIns3,5P(2)) as substrates and produces phosphatidylinositol-5-phosphate (PtdIns5P); participates in pathway(s) that transfer gene regulatory signals to the nucleus. Required for recovery after water deprivation, via the accumulation of PtdIns5P upon dehydration; high PtdIns5P levels mediate ATX1 cytoplasmic localization, thus down-regulating the expression of ATX1-dependent genes. Confers sensitivity to soil-water-deficit stress. The polypeptide is Phosphatidylinositol-3-phosphatase myotubularin-1 (MTM1) (Arabidopsis thaliana (Mouse-ear cress)).